A 1036-amino-acid polypeptide reads, in one-letter code: Protein CLEC16A (1036 aa).

Positions 51 to 198 constitute an FPL domain; the sequence is IRSITEILIW…AVRTITLNVY (148 aa). Disordered stretches follow at residues 375–416, 437–458, 876–967, and 1008–1036; these read SLEM…DAEK, GTSV…NSEN, HSSP…PSLL, and SQLP…PTEH. The segment covering 381–392 has biased composition (basic residues); the sequence is HKGKKRMQKRPN. Low complexity-rich tracts occupy residues 877 to 891, 898 to 923, and 943 to 954; these read SSPS…FASG, STSH…APTT, and NSKPSKNSSARS.

Belongs to the CLEC16A/gop-1 family. In terms of assembly, interacts with RNF41/NRDP1. In terms of tissue distribution, ubiquitously expressed. Expressed in pancreatic islets.

It localises to the endosome membrane. The protein localises to the lysosome membrane. Regulator of mitophagy through the upstream regulation of the RNF41/NRDP1-PRKN pathway. Mitophagy is a selective form of autophagy necessary for mitochondrial quality control. The RNF41/NRDP1-PRKN pathway regulates autophagosome-lysosome fusion during late mitophagy. May protect RNF41/NRDP1 from proteasomal degradation, RNF41/NRDP1 which regulates proteasomal degradation of PRKN. Plays a key role in beta cells functions by regulating mitophagy/autophagy and mitochondrial health. The protein is Protein CLEC16A of Mus musculus (Mouse).